The primary structure comprises 168 residues: Ribosome maturation factor RimM (168 aa).

Residues 95–168 form the PRC barrel domain; the sequence is KEGDYYWTDL…IIVVEWDADF (74 aa).

The protein belongs to the RimM family. Binds ribosomal protein uS19.

It is found in the cytoplasm. In terms of biological role, an accessory protein needed during the final step in the assembly of 30S ribosomal subunit, possibly for assembly of the head region. Essential for efficient processing of 16S rRNA. May be needed both before and after RbfA during the maturation of 16S rRNA. It has affinity for free ribosomal 30S subunits but not for 70S ribosomes. This is Ribosome maturation factor RimM from Coxiella burnetii (strain CbuK_Q154) (Coxiella burnetii (strain Q154)).